The primary structure comprises 488 residues: Transmembrane protein 39A (488 aa).

2 N-linked (GlcNAc...) asparagine glycosylation sites follow: Asn31 and Asn39. The next 3 membrane-spanning stretches (helical) occupy residues 72 to 92 (GLLFEFLFFIYLLVALFIQYI), 110 to 130 (TSLNFHLIDYHLAAFITVMLA), and 155 to 175 (LITARLVLLTLCGWVFCWTLV). An N-linked (GlcNAc...) asparagine glycan is attached at Asn180. The next 5 helical transmembrane spans lie at 182-202 (SVLNLLFLGYPFGVYVPLCCF), 287-307 (EVLFNSLFSAYYVAFLPLCFV), 319-339 (CEHLIMVWINAFVMLSTQLLP), 420-440 (LLNLLLIIEGSLVLYQLYSLL), and 446-466 (NHTLSIALILFCNYYVLFKLL).

This sequence belongs to the TMEM39 family.

The protein resides in the endoplasmic reticulum membrane. Functionally, regulates autophagy by controlling the spatial distribution and levels of the intracellular phosphatidylinositol 4-phosphate (PtdIns(4)P) pools. Modulates (PtdIns(4)P) levels by regulating the ER-to-Golgi trafficking of the phosphatidylinositide phosphatase SACM1L. The chain is Transmembrane protein 39A (tmem39a) from Xenopus tropicalis (Western clawed frog).